The following is a 121-amino-acid chain: Ribosome-binding factor A (121 aa).

The protein belongs to the RbfA family. Monomer. Binds 30S ribosomal subunits, but not 50S ribosomal subunits or 70S ribosomes.

Its subcellular location is the cytoplasm. In terms of biological role, one of several proteins that assist in the late maturation steps of the functional core of the 30S ribosomal subunit. Associates with free 30S ribosomal subunits (but not with 30S subunits that are part of 70S ribosomes or polysomes). Required for efficient processing of 16S rRNA. May interact with the 5'-terminal helix region of 16S rRNA. In Finegoldia magna (strain ATCC 29328 / DSM 20472 / WAL 2508) (Peptostreptococcus magnus), this protein is Ribosome-binding factor A.